A 95-amino-acid chain; its full sequence is uncharacterized protein (95 aa).

The N-terminal stretch at 1–17 (MTSSLVIYIFLWSRLIC) is a signal peptide.

This is an uncharacterized protein from Saccharomyces cerevisiae (strain ATCC 204508 / S288c) (Baker's yeast).